An 824-amino-acid polypeptide reads, in one-letter code: MGNTATKEARPPAGTSGRNGHGRGPSGGAVALGGLGRFHNQPESSQPGVSSRHFRGSRPDLSFLGIGPAVDRDSFVERKETKQERDARRLARERAARIKERERSMKEEHVDGGYLVTQGVYTGVEDFNKAVVRQLMIERRLAPFWKGLEEFSDSWTEHQLMAAARGLLIPAPDEIPPELEYKLTPPRLPEDQDLPDQNLNNLTVPITSRSQSYNSDLSSTTHPVSPSISLQPQLSPGVSGSPGAHLFRGRAKTLASLTASSKHSSPGEMSPRELQLPKDPFVNGQPIEAYLYKNPIECPICFLYYPPYLNRTRCCDQWICSECFVQIKRADPHLPEHEQRDPNSPSPDRPDGQLISEPAGCPFCVQPDFGVSYTPPPFRRGLSYIPSNSLDKTLLSPASSTSSLVSGNANSHSITTRRRATSLSANSPAVIMTDKIRPDWAHKLQTARAQAARRSAAATALHAAAYINAMNNPIETRGMGSSSRRMLRRTTGHGSDNSTNQAGSVALLAERRAIAADRENDSPAESTSNLAPARASSRRNRMDELEEMMMMEAIRLSLASEEERRKKEEKEAKKEAKRREREAKRAEKLARKNGLYSNNPSSVALDATGSNTAVRTGRELSPPVSVLEPSSDKGKAVDRPGSLSEPPHTDTQLPGLPKLSLKTSDDDLSSIFAPSSAAAAKRSHLRHISSSSSSNSSLVGSACGELIGSGSTPNFNSAIEPVLNFRSLDAVIDDENTNGSRHEHLEGATKLKKTQQPSNDNAISPRPNRDLGLGVEPGSVQQATVPPQGDSSINKDENDVRDKELQSHTAETMHGGNTNLETVG.

9 disordered regions span residues 1-66 (MGNT…FLGI), 183-202 (LTPPRLPEDQDLPDQNLNNL), 210-242 (SQSYNSDLSSTTHPVSPSISLQPQLSPGVSGSP), 256-278 (SLTASSKHSSPGEMSPRELQLPK), 397-421 (PASSTSSLVSGNANSHSITTRRRAT), 473-503 (PIETRGMGSSSRRMLRRTTGHGSDNSTNQAG), 517-539 (DRENDSPAESTSNLAPARASSRR), 561-662 (EEER…LSLK), and 735-824 (ENTN…ETVG). Over residues 17 to 36 (GRNGHGRGPSGGAVALGGLG) the composition is skewed to gly residues. Positions 210–222 (SQSYNSDLSSTTH) are enriched in polar residues. Over residues 223-236 (PVSPSISLQPQLSP) the composition is skewed to low complexity. The span at 397–406 (PASSTSSLVS) shows a compositional bias: low complexity. Polar residues predominate over residues 493–503 (HGSDNSTNQAG). Positions 561 to 590 (EEERRKKEEKEAKKEAKRREREAKRAEKLA) are enriched in basic and acidic residues. The segment covering 595–614 (LYSNNPSSVALDATGSNTAV) has biased composition (polar residues). The span at 619-629 (ELSPPVSVLEP) shows a compositional bias: low complexity. Residues 740–749 (SRHEHLEGAT) show a composition bias toward basic and acidic residues. The span at 779 to 792 (SVQQATVPPQGDSS) shows a compositional bias: polar residues. The segment covering 793 to 806 (INKDENDVRDKELQ) has biased composition (basic and acidic residues). The span at 807-824 (SHTAETMHGGNTNLETVG) shows a compositional bias: polar residues.

This sequence belongs to the SIP5 family.

Its subcellular location is the cytoplasm. Its function is as follows. May negatively regulate the SNF1 kinase. The protein is Protein SIP5 (SIP5) of Ajellomyces capsulatus (strain NAm1 / WU24) (Darling's disease fungus).